Reading from the N-terminus, the 292-residue chain is MFRGSHVAIVTPMLEDGALDLDRFCALIDFHIEQGTDGIVVVGTTGESPTVDFDEHDLLIRTAVSYADGRIPIIAGTGANSTREAIELTVFSKNAGADACLSVAPYYNKPTQEGLYQHFKAIAEAVDIPMILYNVPGRTVADISNETTLRLAQIPGIVGIKDATGNIARGCDLVQRVPDNFAVYSGDDATALALLLLGGHGIISVTANVAPRLMHEMCTAALSGDLAQARAINARLFKLHIDLFVEANPIPVKWAVAKMGLINENIRLPLTALSSQHHELIRKAMLQAGITV.

Threonine 45 contributes to the pyruvate binding site. Residue tyrosine 133 is the Proton donor/acceptor of the active site. Catalysis depends on lysine 161, which acts as the Schiff-base intermediate with substrate. Pyruvate is bound at residue isoleucine 203.

This sequence belongs to the DapA family. As to quaternary structure, homotetramer; dimer of dimers.

The protein resides in the cytoplasm. It catalyses the reaction L-aspartate 4-semialdehyde + pyruvate = (2S,4S)-4-hydroxy-2,3,4,5-tetrahydrodipicolinate + H2O + H(+). The protein operates within amino-acid biosynthesis; L-lysine biosynthesis via DAP pathway; (S)-tetrahydrodipicolinate from L-aspartate: step 3/4. Its function is as follows. Catalyzes the condensation of (S)-aspartate-beta-semialdehyde [(S)-ASA] and pyruvate to 4-hydroxy-tetrahydrodipicolinate (HTPA). This Nitrosomonas eutropha (strain DSM 101675 / C91 / Nm57) protein is 4-hydroxy-tetrahydrodipicolinate synthase.